The following is a 534-amino-acid chain: Glucan endo-1,3-beta-glucosidase 12 (534 aa).

A signal peptide spans 1-24 (MGQRLNLVFWIFVSILAFLNFGMA). Catalysis depends on glutamate 120, which acts as the Proton donor. An N-linked (GlcNAc...) asparagine glycan is attached at asparagine 127. Residue glutamate 264 is the Nucleophile of the active site. N-linked (GlcNAc...) asparagine glycans are attached at residues asparagine 336, asparagine 357, and asparagine 375. The disordered stretch occupies residues 348 to 379 (ENTTPVSPTNSTTGTSPSPSSSPIINGNSTVT). Residues 349 to 377 (NTTPVSPTNSTTGTSPSPSSSPIINGNST) show a composition bias toward low complexity. Cysteine 392 and cysteine 455 are disulfide-bonded. Asparagine 485, asparagine 491, and asparagine 495 each carry an N-linked (GlcNAc...) asparagine glycan. A lipid anchor (GPI-anchor amidated serine) is attached at serine 507. A propeptide spans 508-534 (STNEAFRQMVVAVSVLLPCFVVCSSIW) (removed in mature form).

This sequence belongs to the glycosyl hydrolase 17 family. Post-translationally, contains two additional disulfide bonds.

It localises to the secreted. The protein resides in the cell wall. The protein localises to the cell membrane. The catalysed reaction is Hydrolysis of (1-&gt;3)-beta-D-glucosidic linkages in (1-&gt;3)-beta-D-glucans.. This is Glucan endo-1,3-beta-glucosidase 12 from Arabidopsis thaliana (Mouse-ear cress).